The sequence spans 73 residues: uncharacterized protein (73 aa).

This is an uncharacterized protein from Methanocaldococcus jannaschii (strain ATCC 43067 / DSM 2661 / JAL-1 / JCM 10045 / NBRC 100440) (Methanococcus jannaschii).